Reading from the N-terminus, the 405-residue chain is L-carnitine CoA-transferase (405 aa).

CoA contacts are provided by lysine 97 and arginine 104. Catalysis depends on aspartate 169, which acts as the Nucleophile.

The protein belongs to the CoA-transferase III family. CaiB subfamily. Homodimer.

The protein resides in the cytoplasm. It carries out the reaction crotonobetainyl-CoA + (R)-carnitine = crotonobetaine + (R)-carnitinyl-CoA. The enzyme catalyses 4-(trimethylamino)butanoyl-CoA + (R)-carnitine = (R)-carnitinyl-CoA + 4-(trimethylamino)butanoate. The protein operates within amine and polyamine metabolism; carnitine metabolism. Its function is as follows. Catalyzes the reversible transfer of the CoA moiety from gamma-butyrobetainyl-CoA to L-carnitine to generate L-carnitinyl-CoA and gamma-butyrobetaine. Is also able to catalyze the reversible transfer of the CoA moiety from gamma-butyrobetainyl-CoA or L-carnitinyl-CoA to crotonobetaine to generate crotonobetainyl-CoA. The sequence is that of L-carnitine CoA-transferase from Escherichia coli (strain 55989 / EAEC).